We begin with the raw amino-acid sequence, 507 residues long: Maturase K (507 aa).

This sequence belongs to the intron maturase 2 family. MatK subfamily.

The protein localises to the plastid. The protein resides in the chloroplast. Functionally, usually encoded in the trnK tRNA gene intron. Probably assists in splicing its own and other chloroplast group II introns. The sequence is that of Maturase K from Nymphaea alba (White water-lily).